Reading from the N-terminus, the 85-residue chain is MVRIRLALYGTKKRPFYKMVVADSRFSRDGRFIEKLGHFNPVSKCQNSTLKLNLNRIEYWQGKGAQISKRSQKLIKLFNKKEDTV.

It belongs to the bacterial ribosomal protein bS16 family.

This chain is Small ribosomal subunit protein bS16, found in Buchnera aphidicola subsp. Schizaphis graminum (strain Sg).